Reading from the N-terminus, the 676-residue chain is MAKIKKKGTSGQAKNYITRTQAVRKLQISLPDFRRLCIFKGIYPREPRNKKKASKTSTPNTTFYYTKDIQYLLHEPLLRKFRDQKAVAKKIARSLGRGEVGDASRLEKNHAPKLTLDHIIKERYPTFIDALRDLDDALSLLFLFANLPSTSHVPPKTIALCQRLCHEFQHYLITTNSLRKSFLSIKGIYYQATIQGQDIMWLVPYRFVQRVNGDVDYRIMATFVEFYTTLLGFVNFRLYSSIGLRYPPKFDTRSDENGAELAAFTLEGRAVANAAKTIEGSNKQSNNSSNQEVSRDVQAKVDKVIKTAGLDKTKDEQTVEATDENTDAIDRFEPAAPEADTLPQPDISGEEAGALFAPFTFYISREAPKAPLEFILRAFGCKRIGWDAVMGDGAFTHNEADTRITHQIVDRPSLPEGALPAVPAAKEGAVPAVRPGTRIPGRTYIQPQWVWDCINEGKLLRPDLYAPGETLPPHLSPWVKPSKGAYDPRATLAEQEEEGEAEMAGEEEEEESDEEMEEAPETKKADAKADESESEDEDESVDGGMDVADSDDDESESGQEEEDFGGFDDNEAASESEDEEEAARTQHQKELEAEAAGLPFSSNGATDDAKKKKSSQAKKIAAKKRKEEEELERQKMMMSRKKRKLLEKMMYSNKKQSEEAAKLRSKRRKLEKTGEK.

A disordered region spans residues threonine 277 to aspartate 296. Positions serine 281–glutamine 291 are enriched in low complexity. A BRCT domain is found at glutamate 351–proline 467. The tract at residues leucine 471 to lysine 676 is disordered. A compositionally biased stretch (acidic residues) spans glutamate 494–alanine 519. Basic and acidic residues predominate over residues proline 520–glutamate 531. Acidic residues-rich tracts occupy residues serine 532–valine 541 and alanine 548–glutamate 581. Residues glutamate 571–lysine 676 are a coiled coil. The span at alanine 582–glutamate 592 shows a compositional bias: basic and acidic residues. The span at lysine 611–lysine 624 shows a compositional bias: basic residues. Residues arginine 625–lysine 635 are compositionally biased toward basic and acidic residues.

The protein belongs to the pescadillo family. As to quaternary structure, component of the NOP7 complex, composed of erb1, nop7 and ytm1. The complex is held together by erb1, which interacts with nop7 via its N-terminal domain and with ytm1 via a high-affinity interaction between the seven-bladed beta-propeller domains of the 2 proteins. The NOP7 complex associates with the 66S pre-ribosome.

It localises to the nucleus. The protein resides in the nucleolus. It is found in the nucleoplasm. Functionally, component of the NOP7 complex, which is required for maturation of the 25S and 5.8S ribosomal RNAs and formation of the 60S ribosome. This Aspergillus terreus (strain NIH 2624 / FGSC A1156) protein is Pescadillo homolog (nop7).